Consider the following 79-residue polypeptide: Conotoxin VnMKLT1-01121 (79 aa).

The N-terminal stretch at 1 to 22 is a signal peptide; sequence MKLTCMMIVAVLFLTAWTFVTA. Positions 23–48 are excised as a propeptide; that stretch reads DDSRNGLEYLFPKAHYEMNPEASKLN. 3 cysteine pairs are disulfide-bonded: Cys-53–Cys-70, Cys-60–Cys-74, and Cys-69–Cys-78.

It belongs to the conotoxin O1 superfamily. Expressed by the venom duct.

It is found in the secreted. In Conus ventricosus (Mediterranean cone), this protein is Conotoxin VnMKLT1-01121.